Reading from the N-terminus, the 555-residue chain is Phosphoglucomutase (555 aa).

Alpha-D-glucose 1,6-bisphosphate-binding residues include arginine 22 and serine 114. The active-site Phosphoserine intermediate is the serine 114. Mg(2+) contacts are provided by serine 114, aspartate 279, aspartate 281, and aspartate 283. Serine 114 is subject to Phosphoserine. Residues aspartate 283, arginine 284, threonine 347, glutamate 366, serine 368, and lysine 379 each contribute to the alpha-D-glucose 1,6-bisphosphate site.

It belongs to the phosphohexose mutase family. As to quaternary structure, monomer. The cofactor is Mg(2+).

The protein resides in the cytoplasm. The catalysed reaction is alpha-D-glucose 1-phosphate = alpha-D-glucose 6-phosphate. It carries out the reaction O-phospho-L-seryl-[protein] + alpha-D-glucose 1-phosphate = alpha-D-glucose 1,6-bisphosphate + L-seryl-[protein]. The enzyme catalyses alpha-D-glucose 1,6-bisphosphate + L-seryl-[protein] = O-phospho-L-seryl-[protein] + alpha-D-glucose 6-phosphate. Its function is as follows. Catalyzes the reversible isomerization of alpha-D-glucose 1-phosphate to alpha-D-glucose 6-phosphate. The mechanism proceeds via the intermediate compound alpha-D-glucose 1,6-bisphosphate. Key enzyme in hexose metabolism. The reverse reaction is an essential step for biosynthesis because glucose 1-phosphate is the starting point for the synthesis of UDP-glucose, which acts as a precursor for the synthesis of oligosaccharides and trehalose. The polypeptide is Phosphoglucomutase (pgmA) (Aspergillus oryzae (strain ATCC 42149 / RIB 40) (Yellow koji mold)).